The following is a 22-amino-acid chain: Lantibiotic mutacin B-Ny266 (22 aa).

Positions 3 to 7 (SWSFC) form a cross-link, lanthionine (Ser-Cys). A 2,3-didehydroalanine (Ser) modification is found at Ser-5. The segment at residues 8–11 (TPGC) is a cross-link (beta-methyllanthionine (Thr-Cys)). Thr-14 is modified (2,3-didehydrobutyrine). The segment at residues 16 to 21 (SFNSYC) is a cross-link (lanthionine (Ser-Cys)). The S-(2-aminovinyl)-D-cysteine (Ser-Cys) cross-link spans 19-22 (SYCC).

Post-translationally, maturation of lantibiotics involves the enzymatic conversion of Thr, and Ser into dehydrated AA and the formation of thioether bonds with cysteine. The C-terminal lanthionine undergoes decarboxylation. This is followed by membrane translocation and cleavage of the modified precursor. It is not established whether the 2,3-didehydrobutyrine is the E- or Z-isomer.

Functionally, lanthionine-containing peptide antibiotic (lantibiotic) active on Gram-positive bacteria. The bactericidal activity of lantibiotics is based on depolarization of energized bacterial cytoplasmic membranes, initiated by the formation of aqueous transmembrane pores. This is Lantibiotic mutacin B-Ny266 from Streptococcus mutans.